A 266-amino-acid chain; its full sequence is Orotidine 5'-phosphate decarboxylase (266 aa).

Residues Asp-37, 59-61, 91-100, Tyr-217, and Arg-235 each bind substrate; these read KTH and DRKFADIGNT. Lys-93 functions as the Proton donor in the catalytic mechanism.

Belongs to the OMP decarboxylase family.

It catalyses the reaction orotidine 5'-phosphate + H(+) = UMP + CO2. Its pathway is pyrimidine metabolism; UMP biosynthesis via de novo pathway; UMP from orotate: step 2/2. This chain is Orotidine 5'-phosphate decarboxylase (URA3), found in Cyberlindnera jadinii (Torula yeast).